We begin with the raw amino-acid sequence, 99 residues long: Protein S100-Z (99 aa).

EF-hand domains lie at 13 to 48 (ITVF…FLMS) and 50 to 85 (KDPM…LTVA). Ca(2+)-binding residues include serine 20, glutamate 23, aspartate 25, lysine 28, glutamate 33, aspartate 63, asparagine 65, aspartate 67, glutamate 69, and glutamate 74.

It belongs to the S-100 family. As to quaternary structure, homodimer. Homodimers may assemble into larger stable oligomers. As to expression, in larva at 5 days post-fertilization, shows very restricted expression only in a few large cells of the olfactory placode. More widely expressed in the adult. Expressed at higher levels in gut than in spleen, head kidney and gill.

This chain is Protein S100-Z, found in Danio rerio (Zebrafish).